Reading from the N-terminus, the 267-residue chain is Mitochondrial S-adenosylmethionine carrier protein (267 aa).

3 Solcar repeats span residues 4–77 (REFT…TKSV), 86–168 (LAPI…LKAV), and 177–265 (LDSW…VRRT). 6 helical membrane passes run 5–25 (EFTA…LTLF), 49–69 (IYAG…AFFV), 85–105 (NLAP…ACLI), 142–162 (RGYG…FPLW), 182–202 (AAVC…PLDV), and 238–258 (FAGS…FLGA).

The protein belongs to the mitochondrial carrier (TC 2.A.29) family.

It localises to the mitochondrion inner membrane. It catalyses the reaction S-adenosyl-L-homocysteine(out) + S-adenosyl-L-methionine(in) = S-adenosyl-L-homocysteine(in) + S-adenosyl-L-methionine(out). Functionally, mitochondrial S-adenosyl-L-methionine/S-adenosyl-L-homocysteine antiporter. Mediates the exchange of cytosolic S-adenosyl-L-methionine, the predominant methyl-group donor for macromolecule methylation processes, for mitochondrial S-adenosylhomocysteine(SAH), a by-product of methylation reactions. The polypeptide is Mitochondrial S-adenosylmethionine carrier protein (slc25a26) (Danio rerio (Zebrafish)).